We begin with the raw amino-acid sequence, 212 residues long: Glycerol-3-phosphate acyltransferase (212 aa).

The next 5 membrane-spanning stretches (helical) occupy residues 3-23, 51-71, 78-98, 115-135, and 139-159; these read ILLA…VIVS, KAAI…VWLA, DVAI…PVFF, AVHP…AFFF, and SLAA…LFGT.

The protein belongs to the PlsY family. Probably interacts with PlsX.

Its subcellular location is the cell inner membrane. The catalysed reaction is an acyl phosphate + sn-glycerol 3-phosphate = a 1-acyl-sn-glycero-3-phosphate + phosphate. The protein operates within lipid metabolism; phospholipid metabolism. In terms of biological role, catalyzes the transfer of an acyl group from acyl-phosphate (acyl-PO(4)) to glycerol-3-phosphate (G3P) to form lysophosphatidic acid (LPA). This enzyme utilizes acyl-phosphate as fatty acyl donor, but not acyl-CoA or acyl-ACP. The polypeptide is Glycerol-3-phosphate acyltransferase (Burkholderia multivorans (strain ATCC 17616 / 249)).